Consider the following 201-residue polypeptide: Recombination protein RecR (201 aa).

The segment at 57-72 (CADCRTFTEQEVCNIC) adopts a C4-type zinc-finger fold. The Toprim domain maps to 81 to 176 (GQICVVESPA…EASRIAHGVP (96 aa)).

This sequence belongs to the RecR family.

Functionally, may play a role in DNA repair. It seems to be involved in an RecBC-independent recombinational process of DNA repair. It may act with RecF and RecO. This chain is Recombination protein RecR, found in Salmonella arizonae (strain ATCC BAA-731 / CDC346-86 / RSK2980).